Reading from the N-terminus, the 153-residue chain is Ribosomal RNA large subunit methyltransferase H (153 aa).

2 residues coordinate S-adenosyl-L-methionine: L71 and G102.

Belongs to the RNA methyltransferase RlmH family. In terms of assembly, homodimer.

Its subcellular location is the cytoplasm. It carries out the reaction pseudouridine(1915) in 23S rRNA + S-adenosyl-L-methionine = N(3)-methylpseudouridine(1915) in 23S rRNA + S-adenosyl-L-homocysteine + H(+). Functionally, specifically methylates the pseudouridine at position 1915 (m3Psi1915) in 23S rRNA. The chain is Ribosomal RNA large subunit methyltransferase H from Anaeromyxobacter dehalogenans (strain 2CP-C).